Consider the following 362-residue polypeptide: MELSAVGERVFAAEALLKRRIRKGRMEYLVKWKGWSQKYSTWEPEENILDARLLAAFEEREREMELYGPKKRGPKPKTFLLKAQAKAKAKTYEFRSDSTRGIRIPYPGRSPQDLASTSRAREGLRNTGLPPPGSSTSTCRADPPRDRDRERDRGTSRVDDKPSSPGDSSKKRGPKPRKEPLDPSQRPLGEPSAGLGEYLKGRKLDETSSGTGKFPAGHSVIQLARRQDSDLVQYGVTSPSSAEASSKLAVDTFPARVIKHRAAFLEAKGQGALDPGGARVRHSSGTPASVGSLYRDMGAQGGRPSLIARIPVARILGDPEEESWSPSLTNLEKVVVTDVTSNFLTVTIKESNTDQGFFKEKR.

The Chromo domain maps to phenylalanine 11 to proline 69. The span at lysine 90–arginine 100 shows a compositional bias: basic and acidic residues. The tract at residues lysine 90 to glutamate 197 is disordered. At serine 110 the chain carries Phosphoserine. Positions aspartate 142–proline 162 are enriched in basic and acidic residues. Serine 164 and serine 229 each carry phosphoserine. Tyrosine 234 bears the Phosphotyrosine mark. Serine 238, serine 284, serine 305, and serine 325 each carry phosphoserine.

As to quaternary structure, component of a PRC1-like complex. Interacts with RING1, RNF2, PCGF1, PCGF2, PCGF3, BMI1, PCGF5, PCGF6 and PHC2. Interacts with histone H3. Interacts with MLLT3. Interacts with PHC2. Interacts (via chromodomain) with single-stranded RNA.

The protein localises to the nucleus. It is found in the chromosome. Functionally, component of a Polycomb group (PcG) multiprotein PRC1-like complex, a complex class required to maintain the transcriptionally repressive state of many genes, including Hox genes, throughout development. PcG PRC1 complex acts via chromatin remodeling and modification of histones; it mediates monoubiquitination of histone H2A 'Lys-119', rendering chromatin heritably changed in its expressibility. This is Chromobox protein homolog 8 (Cbx8) from Mus musculus (Mouse).